The primary structure comprises 196 residues: Potassium-transporting ATPase KdpC subunit (196 aa).

The helical transmembrane segment at 7–27 threads the bilayer; that stretch reads PAIVSAGLFTVLLGLAYPLAV.

This sequence belongs to the KdpC family. In terms of assembly, the system is composed of three essential subunits: KdpA, KdpB and KdpC.

It is found in the cell inner membrane. Functionally, part of the high-affinity ATP-driven potassium transport (or Kdp) system, which catalyzes the hydrolysis of ATP coupled with the electrogenic transport of potassium into the cytoplasm. This subunit acts as a catalytic chaperone that increases the ATP-binding affinity of the ATP-hydrolyzing subunit KdpB by the formation of a transient KdpB/KdpC/ATP ternary complex. The sequence is that of Potassium-transporting ATPase KdpC subunit from Caulobacter sp. (strain K31).